Consider the following 318-residue polypeptide: Acetyl-coenzyme A carboxylase carboxyl transferase subunit alpha (318 aa).

In terms of domain architecture, CoA carboxyltransferase C-terminal spans 38–292 (ALDRKAEEML…GEAIAAMLGE (255 aa)).

The protein belongs to the AccA family. Acetyl-CoA carboxylase is a heterohexamer composed of biotin carboxyl carrier protein (AccB), biotin carboxylase (AccC) and two subunits each of ACCase subunit alpha (AccA) and ACCase subunit beta (AccD).

It is found in the cytoplasm. The catalysed reaction is N(6)-carboxybiotinyl-L-lysyl-[protein] + acetyl-CoA = N(6)-biotinyl-L-lysyl-[protein] + malonyl-CoA. It functions in the pathway lipid metabolism; malonyl-CoA biosynthesis; malonyl-CoA from acetyl-CoA: step 1/1. Functionally, component of the acetyl coenzyme A carboxylase (ACC) complex. First, biotin carboxylase catalyzes the carboxylation of biotin on its carrier protein (BCCP) and then the CO(2) group is transferred by the carboxyltransferase to acetyl-CoA to form malonyl-CoA. The protein is Acetyl-coenzyme A carboxylase carboxyl transferase subunit alpha of Paracoccus denitrificans (strain Pd 1222).